The primary structure comprises 183 residues: Streptavidin-V1 (183 aa).

The first 24 residues, 1–24 (MRKIVVAAIAVSLTTVSITASASA), serve as a signal peptide directing secretion. An Avidin-like domain is found at 37-159 (AEAGITGTWY…GHDTFTKVKP (123 aa)). Biotin is bound by residues Tyr-67 and Tyr-78. A Cell attachment site; atypical motif is present at residues 83–85 (RYD). The biotin site is built by Trp-116, Trp-132, and Trp-144.

This sequence belongs to the avidin/streptavidin family. As to quaternary structure, homotetramer.

The protein localises to the secreted. Functionally, the biological function of streptavidin is not known. Forms a strong non-covalent specific complex with biotin (one molecule of biotin per subunit of streptavidin). This chain is Streptavidin-V1, found in Streptomyces violaceus (Streptomyces venezuelae).